Reading from the N-terminus, the 840-residue chain is MAEKEEAIFRSAEMALVQFYIPQEISRDSAYTLGQLGLVQFRDLNSKVRAFQRTFVNEIRRLDNVERQYRYFYSLLKKHDIKLYEGDTDKYLDGSGELYVPPSGSVIDDYVRNASYLEERLIQMEDATDQIEVQKNDLEQYRFILQSGDEFFLKGDNTDSTSYMDEDMIDANGENIAAAIGASVNYVTGVIARDKVATLEQILWRVLRGNLFFKTVEIEQPVYDVKTREYKHKNAFIVFSHGDLIIKRIRKIAESLDANLYDVDSSNEGRSQQLAKVNKNLSDLYTVLKTTSTTLESELYAIAKELDSWFQDVTREKAIFEILNKSNYDTNRKILIAEGWIPRDELATLQARLGEMIARLGIDVPSIIQVLDTNHTPPTFHRTNKFTAGFQSICDCYGIAQYREINAGLPTIVTFPFMFAIMFGDMGHGFLMTLAALSLVLNEKKINKMKRGEIFDMAFTGRYIILLMGVFSMYTGFLYNDIFSKTMTIFKSGWKWPDHWKKGESITATSVGTYPIGLDWAWHGTENALLFSNSYKMKLSILMGFIHMTYSYFFSLANHLYFNSMIDIIGNFIPGLLFMQGIFGYLSVCIVYKWAVDWVKDGKPAPGLLNMLINMFLSPGTIDDELYPHQAKVQVFLLLMALVCIPWLLLVKPLHFKFTHKKKSHEPLPSTEADASSEDLEAQQLISAMDADDAEEEEVGSGSHGEDFGDIMIHQVIHTIEFCLNCVSHTASYLRLWALSLAHAQLSSVLWTMTIQIAFGFRGFVGVFMTVALFAMWFALTCAVLVLMEGTSAMLHSLRLHWVESMSKFFVGEGLPYEPFAFEYKDMEVAVASASSSASS.

Position 2 is an N-acetylalanine (A2). At A2–E404 the chain is on the cytoplasmic side. Residues L117–L145 are a coiled coil. Residues I405–F423 form a helical membrane-spanning segment. At G424–D425 the chain is on the vacuolar side. Residues M426–N442 form a helical membrane-spanning segment. The Cytoplasmic portion of the chain corresponds to E443–D456. A helical transmembrane segment spans residues M457–T486. Topologically, residues M487–S534 are vacuolar. The chain crosses the membrane as a helical span at residues Y535–F554. The Cytoplasmic segment spans residues S555 to F572. The helical transmembrane segment at I573 to K593 threads the bilayer. The Vacuolar segment spans residues W594 to F636. Residues L637–F656 form a helical membrane-spanning segment. Residues K657–T719 lie on the Cytoplasmic side of the membrane. The helical transmembrane segment at I720–A744 threads the bilayer. The Vacuolar portion of the chain corresponds to Q745 to V765. The chain crosses the membrane as a helical span at residues G766–E804. The Cytoplasmic portion of the chain corresponds to S805 to S840.

It belongs to the V-ATPase 116 kDa subunit family. As to quaternary structure, V-ATPase is a heteromultimeric enzyme composed of a peripheral catalytic V1 complex (components A to H) attached to an integral membrane V0 proton pore complex (components: a, c, c', c'', d, e, f and VOA1). In terms of processing, glycosylated.

The protein resides in the vacuole membrane. Functionally, subunit of the V0 complex of vacuolar(H+)-ATPase (V-ATPase), a multisubunit enzyme composed of a peripheral complex (V1) that hydrolyzes ATP and a membrane integral complex (V0) that translocates protons. V-ATPase is responsible for acidifying and maintaining the pH of intracellular compartments. Is present only in vacuolar V-ATPase complexes; enzymes containing this subunit have a 4-fold higher ratio of proton transport to ATP hydrolysis than complexes containing the Golgi/endosomal isoform and undergo reversible dissociation of V1 and V0 in response to glucose depletion. This chain is V-type proton ATPase subunit a, vacuolar isoform, found in Saccharomyces cerevisiae (strain ATCC 204508 / S288c) (Baker's yeast).